Reading from the N-terminus, the 604-residue chain is Elongation factor 4 1 (604 aa).

Positions 10–191 (EHIRNFCIIA…AIVDSVPAPT (182 aa)) constitute a tr-type G domain. GTP is bound by residues 22–27 (DHGKST) and 138–141 (NKID).

The protein belongs to the TRAFAC class translation factor GTPase superfamily. Classic translation factor GTPase family. LepA subfamily.

The protein resides in the cell inner membrane. It carries out the reaction GTP + H2O = GDP + phosphate + H(+). In terms of biological role, required for accurate and efficient protein synthesis under certain stress conditions. May act as a fidelity factor of the translation reaction, by catalyzing a one-codon backward translocation of tRNAs on improperly translocated ribosomes. Back-translocation proceeds from a post-translocation (POST) complex to a pre-translocation (PRE) complex, thus giving elongation factor G a second chance to translocate the tRNAs correctly. Binds to ribosomes in a GTP-dependent manner. The protein is Elongation factor 4 1 of Rhodopirellula baltica (strain DSM 10527 / NCIMB 13988 / SH1).